Here is a 94-residue protein sequence, read N- to C-terminus: CRISPR-associated endoribonuclease Cas2 (94 aa).

The protein belongs to the CRISPR-associated endoribonuclease Cas2 protein family. E.coli-subtype subfamily. As to quaternary structure, homodimer. Part of the Cas1-Cas2 complex. Forms a hexamer with 2 Cas1 dimers sandwiching a Cas2 dimer. The DNA lies across a flat surface extending from 1 Cas1 dimer, across the Cas2 dimer and contacting the other Cas1 dimer. Only 1 Cas1 protein from each dimer is catalytic, the other interacts with the Cas2 dimer and possibly target DNA.

In terms of biological role, CRISPR (clustered regularly interspaced short palindromic repeat), is an adaptive immune system that provides protection against mobile genetic elements (viruses, transposable elements and conjugative plasmids). CRISPR clusters contain sequences complementary to antecedent mobile elements and target invading nucleic acids. CRISPR clusters are transcribed and processed into CRISPR RNA (crRNA). The Cas1-Cas2 complex is involved in CRISPR adaptation, the first stage of CRISPR immunity, being required for the addition/removal of CRISPR spacers at the leader end of the CRISPR locus. The Cas1-Cas2 complex introduces staggered nicks into both strands of the CRISPR array near the leader repeat and joins the 5'-ends of the repeat strands with the 3'-ends of the new spacer sequence. Spacer DNA integration requires supercoiled target DNA and 3'-OH ends on the inserted (spacer) DNA and probably initiates with a nucleophilic attack of the C 3'-OH end of the protospacer on the minus strand of the first repeat sequence. Expression of Cas1-Cas2 in a strain lacking both genes permits spacer acquisition. Cas2 not seen to bind DNA alone; the Cas1-Cas2 complex preferentially binds CRISPR-locus DNA. Highest binding is seen to a dual forked DNA complex with 3'-overhangs and a protospacer-adjacent motif-complement specifically positioned. The protospacer DNA lies across a flat surface extending from 1 Cas1 dimer, across the Cas2 dimer and contacting the other Cas1 dimer; the 23 bp-long ds section of the DNA is bracketed by 1 Tyr-22 from each of the Cas1 dimers. Cas1 cuts within the 3'-overhang, to generate a 33-nucleotide DNA that is probably incorporated into the CRISPR leader by a cut-and-paste mechanism. This subunit's probable nuclease activity is not required for spacer acquisition. This chain is CRISPR-associated endoribonuclease Cas2 (ygbF), found in Escherichia coli (strain K12).